Here is a 124-residue protein sequence, read N- to C-terminus: Late embryogenesis abundant protein 37 (124 aa).

The transit peptide at 1–35 directs the protein to the mitochondrion; the sequence is MSQSLFNLKSLSRSINNTIRMRRYIVITKASQRAY.

It belongs to the LEA type 3 family.

It localises to the mitochondrion. The protein is Late embryogenesis abundant protein 37 of Arabidopsis thaliana (Mouse-ear cress).